We begin with the raw amino-acid sequence, 92 residues long: Probable Fe(2+)-trafficking protein (92 aa).

This sequence belongs to the Fe(2+)-trafficking protein family.

Could be a mediator in iron transactions between iron acquisition and iron-requiring processes, such as synthesis and/or repair of Fe-S clusters in biosynthetic enzymes. This Shewanella frigidimarina (strain NCIMB 400) protein is Probable Fe(2+)-trafficking protein.